Here is a 355-residue protein sequence, read N- to C-terminus: D-alanine--D-alanine ligase (355 aa).

The region spanning K143–D350 is the ATP-grasp domain. Residue L178 to E233 participates in ATP binding. Residues D303, E317, and N319 each coordinate Mg(2+).

This sequence belongs to the D-alanine--D-alanine ligase family. Requires Mg(2+) as cofactor. It depends on Mn(2+) as a cofactor.

It is found in the cytoplasm. It catalyses the reaction 2 D-alanine + ATP = D-alanyl-D-alanine + ADP + phosphate + H(+). The protein operates within cell wall biogenesis; peptidoglycan biosynthesis. Its function is as follows. Cell wall formation. This is D-alanine--D-alanine ligase from Prochlorococcus marinus (strain MIT 9215).